Reading from the N-terminus, the 422-residue chain is UDP-N-acetylglucosamine 1-carboxyvinyltransferase (422 aa).

Residue Lys23–Asn24 participates in phosphoenolpyruvate binding. Arg92 contacts UDP-N-acetyl-alpha-D-glucosamine. The active-site Proton donor is the Cys116. Cys116 is subject to 2-(S-cysteinyl)pyruvic acid O-phosphothioketal. Residues Arg121–Leu125, Lys161–Val164, Asp306, and Ile328 contribute to the UDP-N-acetyl-alpha-D-glucosamine site.

This sequence belongs to the EPSP synthase family. MurA subfamily.

The protein localises to the cytoplasm. The enzyme catalyses phosphoenolpyruvate + UDP-N-acetyl-alpha-D-glucosamine = UDP-N-acetyl-3-O-(1-carboxyvinyl)-alpha-D-glucosamine + phosphate. It functions in the pathway cell wall biogenesis; peptidoglycan biosynthesis. In terms of biological role, cell wall formation. Adds enolpyruvyl to UDP-N-acetylglucosamine. The protein is UDP-N-acetylglucosamine 1-carboxyvinyltransferase of Aliivibrio fischeri (strain ATCC 700601 / ES114) (Vibrio fischeri).